A 224-amino-acid polypeptide reads, in one-letter code: MSSYFVNSTFPVTLASGQESFLGQLPLYSSGYADPLRHYPAPYGPGPGQDKGFAASSYYPPAGGGYGRAAPCDYGPAPAFYREKDAACALSGADEPPPFHPEPRKSDCAQDKSVFGETEEQKCSTPVYPWMQRMNSCNSSSFGPSGRRGRQTYTRYQTLELEKEFHYNRYLTRRRRIEIAHALCLTERQIKIWFQNRRMKWKKESKLLSASQLSAEEEEEKPAE.

An Antp-type hexapeptide motif is present at residues 127–132 (VYPWMQ). Positions 146–205 (GRRGRQTYTRYQTLELEKEFHYNRYLTRRRRIEIAHALCLTERQIKIWFQNRRMKWKKES) form a DNA-binding region, homeobox. Ser-214 carries the phosphoserine modification.

Belongs to the Antp homeobox family.

The protein resides in the nucleus. Functionally, sequence-specific transcription factor which is part of a developmental regulatory system that provides cells with specific positional identities on the anterior-posterior axis. In Mus musculus (Mouse), this protein is Homeobox protein Hox-B6 (Hoxb6).